The following is an 867-amino-acid chain: Zinc finger protein zfp-1 (867 aa).

The PHD-type 1 zinc-finger motif lies at 5-57 (VGGCCVCADENGWTDNPLIYCDGENCEVAVHQGCYGIQEVPEGEWFCAKCTKA). A C2HC pre-PHD-type 2 zinc finger spans residues 69–102 (TFCCQLCPFDYGALKKTDRNGWAHVICALYIPEV). The tract at residues 69-186 (TFCCQLCPFD…KYCGYCENHL (118 aa)) is extended PHD2 domain (ePHD2). The PHD-type 2 zinc-finger motif lies at 125-186 (KLCYICNEER…KYCGYCENHL (62 aa)). Disordered stretches follow at residues 267 to 311 (GSTV…SLSS), 440 to 477 (KNDM…GKSP), 503 to 586 (ADRT…QSNR), and 753 to 773 (SSGA…STAG). The segment covering 285 to 311 (PLTTSSRSSVAQDPSPPLTINKNSLSS) has biased composition (polar residues). The span at 503–512 (ADRTAAERRA) shows a compositional bias: basic and acidic residues. Positions 516-527 (QSQPSTSTNGGP) are enriched in polar residues. The segment covering 538–550 (HTNSTNSTNHQNN) has biased composition (low complexity). Over residues 551 to 573 (GLTQNAPASTSMQAGTSSNDGVI) the composition is skewed to polar residues. Positions 574–585 (SQNGTSSTSQSN) are enriched in low complexity. The span at 758–771 (VNSNIQNHRATPST) shows a compositional bias: polar residues.

As to quaternary structure, multimer; in vitro. Interacts (via C-terminus) with dot-1.1 to form a heterodimer known as the zfp-1-dot-1.1 complex or DotCom complex. As to expression, isoform a: Expressed at high levels in maturing oocytes, but at low levels in the rest of the germ line (at protein level). Isoform a: Not expressed in the pharynx, germ line and tail. Isoform c: Not expressed in the germ line (at protein level). Isoform c: Uniformly expressed.

It is found in the nucleus. The protein localises to the chromosome. In terms of biological role, recruits the histone methyltransferase dot-1.1 to chromatin to methylate 'Lys-79' of histone H3 and activate transcription. Recognizes and binds histone H3 methylated at 'Lys-4' (H3K4me) at the promoters of target genes. During stress, the zfp-1-dot-1.1 complex also plays a role in the deubiquitination of histone H2B sites, which negatively modulates the RNA polymerase II-induced transcription of highly expressed genes. In response to stress, binds to the pdk-1 promoter to negatively regulate pdk-1 expression, which negatively modulates daf-16/FOXO-mediated gene expression. Thus, most likely via this mechanism, in response to stress, it confers a protective role against neuronal necrosis. Plays a role in Insulin/IGF-1-like signaling (IIS)- and diet restriction-mediated lifespan extension by controlling daf-16/FOXO and pha-4/FOXA recruitment to target promoters. May negatively regulate the expression of genes required for vulval development. May play a role in axon guidance in D-type motor neurons. May suppress sensitivity to RNAi. Required for migration of HSN motor neurons during embryogenesis. This is Zinc finger protein zfp-1 from Caenorhabditis elegans.